Reading from the N-terminus, the 463-residue chain is Exodeoxyribonuclease 7 large subunit (463 aa).

The protein belongs to the XseA family. Heterooligomer composed of large and small subunits.

It localises to the cytoplasm. It catalyses the reaction Exonucleolytic cleavage in either 5'- to 3'- or 3'- to 5'-direction to yield nucleoside 5'-phosphates.. Its function is as follows. Bidirectionally degrades single-stranded DNA into large acid-insoluble oligonucleotides, which are then degraded further into small acid-soluble oligonucleotides. The chain is Exodeoxyribonuclease 7 large subunit from Klebsiella pneumoniae subsp. pneumoniae (strain ATCC 700721 / MGH 78578).